Here is a 332-residue protein sequence, read N- to C-terminus: Methionine synthase (332 aa).

Zn(2+)-binding residues include H211, C213, and C296.

This sequence belongs to the archaeal MetE family. The cofactor is Zn(2+).

It functions in the pathway amino-acid biosynthesis; L-methionine biosynthesis via de novo pathway. Its function is as follows. Catalyzes the transfer of a methyl group to L-homocysteine resulting in methionine formation. The physiological methyl donor is unknown. This Saccharolobus islandicus (strain L.S.2.15 / Lassen #1) (Sulfolobus islandicus) protein is Methionine synthase.